The sequence spans 589 residues: Threonine--tRNA ligase (589 aa).

Residues 191–487 (DHRKIGKNLG…LLEQTKGNFP (297 aa)) are catalytic. The Zn(2+) site is built by cysteine 284, histidine 335, and histidine 464.

This sequence belongs to the class-II aminoacyl-tRNA synthetase family. As to quaternary structure, homodimer. The cofactor is Zn(2+).

It localises to the cytoplasm. The catalysed reaction is tRNA(Thr) + L-threonine + ATP = L-threonyl-tRNA(Thr) + AMP + diphosphate + H(+). Catalyzes the attachment of threonine to tRNA(Thr) in a two-step reaction: L-threonine is first activated by ATP to form Thr-AMP and then transferred to the acceptor end of tRNA(Thr). Also edits incorrectly charged L-seryl-tRNA(Thr). This Mycoplasmopsis pulmonis (strain UAB CTIP) (Mycoplasma pulmonis) protein is Threonine--tRNA ligase.